Reading from the N-terminus, the 145-residue chain is 3-hydroxyacyl-[acyl-carrier-protein] dehydratase FabZ (145 aa).

The active site involves H47.

This sequence belongs to the thioester dehydratase family. FabZ subfamily.

The protein resides in the cytoplasm. It carries out the reaction a (3R)-hydroxyacyl-[ACP] = a (2E)-enoyl-[ACP] + H2O. Its function is as follows. Involved in unsaturated fatty acids biosynthesis. Catalyzes the dehydration of short chain beta-hydroxyacyl-ACPs and long chain saturated and unsaturated beta-hydroxyacyl-ACPs. In Ruthia magnifica subsp. Calyptogena magnifica, this protein is 3-hydroxyacyl-[acyl-carrier-protein] dehydratase FabZ.